The following is a 30-amino-acid chain: Cyclotide cter-O (30 aa).

Positions 1-30 form a cross-link, cyclopeptide (Gly-Asn); sequence GIPCGESCVFIPCITGIAGCSCKSKVCYRN. Cystine bridges form between Cys-4-Cys-20, Cys-8-Cys-22, and Cys-13-Cys-27.

In terms of processing, this is a cyclic peptide.

It localises to the secreted. Its function is as follows. Probably participates in a plant defense mechanism. In Clitoria ternatea (Butterfly pea), this protein is Cyclotide cter-O.